Consider the following 61-residue polypeptide: Metallothionein-1F (61 aa).

Position 1 is an N-acetylmethionine (M1). Positions 1-29 are beta; it reads MDPNCSCAAGVSCTCAGSCKCKECKCTSC. A divalent metal cation-binding residues include C5, C7, C13, C15, C19, C21, C24, C26, C29, C33, C34, C36, C37, C41, C44, C48, C50, and C57. The segment at 30–61 is alpha; that stretch reads KKSCCSCCPVGCSKCAQGCVCKGASEKCSCCD. A Phosphoserine modification is found at S58. C59 and C60 together coordinate a divalent metal cation.

It belongs to the metallothionein superfamily. Type 1 family. In terms of assembly, monomer.

In terms of biological role, metallothioneins have a high content of cysteine residues that bind various heavy metals; these proteins are transcriptionally regulated by both heavy metals and glucocorticoids. The protein is Metallothionein-1F (MT1F) of Homo sapiens (Human).